Reading from the N-terminus, the 130-residue chain is Small ribosomal subunit protein uS9 (130 aa).

It belongs to the universal ribosomal protein uS9 family.

This Haemophilus influenzae (strain ATCC 51907 / DSM 11121 / KW20 / Rd) protein is Small ribosomal subunit protein uS9 (rpsI).